Reading from the N-terminus, the 894-residue chain is Phosphinomethylmalate isomerase (894 aa).

Positions 438, 504, and 507 each coordinate [4Fe-4S] cluster.

Belongs to the aconitase/IPM isomerase family. Requires [4Fe-4S] cluster as cofactor.

It carries out the reaction phosphinomethylmalate = phosphinomethylisomalate. The enzyme catalyses phosphinomethylmalate = 2-(phosphinatomethylidene)butanedioate + H2O. It catalyses the reaction 2-(phosphinatomethylidene)butanedioate + H2O = phosphinomethylisomalate. It participates in secondary metabolite biosynthesis; bialaphos biosynthesis. In terms of biological role, isomerase involved in the biosynthesis of phosphinothricin tripeptide (PTT), also known as bialaphos (BA), a natural-product antibiotic and potent herbicide. Probably catalyzes the isomerization of phosphinomethylmalate to phosphinomethylisomalate. Shows no standard aconitase activity with citrate as a substrate and is not able to complement an acnA mutant. This Streptomyces viridochromogenes (strain DSM 40736 / JCM 4977 / BCRC 1201 / Tue 494) protein is Phosphinomethylmalate isomerase.